The chain runs to 447 residues: Cytochrome P450 BJ-4 (447 aa).

Cys392 contacts heme.

This sequence belongs to the cytochrome P450 family. Requires heme as cofactor.

Its function is as follows. Cytochromes P450 are a group of heme-thiolate monooxygenases. They oxidize a variety of structurally unrelated compounds, including steroids, fatty acids, and xenobiotics. This Bradyrhizobium diazoefficiens (strain JCM 10833 / BCRC 13528 / IAM 13628 / NBRC 14792 / USDA 110) protein is Cytochrome P450 BJ-4 (cyp117).